The following is a 192-amino-acid chain: Superoxide dismutase [Fe] (192 aa).

H26, H73, D157, and H161 together coordinate Fe cation.

It belongs to the iron/manganese superoxide dismutase family. As to quaternary structure, homodimer. Fe cation serves as cofactor.

It carries out the reaction 2 superoxide + 2 H(+) = H2O2 + O2. Destroys superoxide anion radicals which are normally produced within the cells and which are toxic to biological systems. This Pseudoalteromonas translucida (strain TAC 125) protein is Superoxide dismutase [Fe].